The sequence spans 639 residues: CD2-associated protein (639 aa).

Residues 1-59 enclose the SH3 1; truncated domain; the sequence is MVDYIVEYDYDAVHDDELTIRVGEIIRNVKKLQEEGWLEGELNGRRGMFPDNFVKEIKR. The segment at 1 to 175 is interaction with ANLN and localization to the midbody; sequence MVDYIVEYDY…EVTDDGETHE (175 aa). A Glycyl lysine isopeptide (Lys-Gly) (interchain with G-Cter in SUMO2) cross-link involves residue Lys58. Phosphoserine occurs at positions 67, 80, and 86. An SH3 2 domain is found at 108-167; sequence TKKRQCKVLFEYIPQNEDELELKVGDIIDINEEVEEGWWSGTLNNKLGLFPSNFVKELEV. Residues 168–177 show a composition bias toward basic and acidic residues; it reads TDDGETHEAQ. The disordered stretch occupies residues 168 to 209; the sequence is TDDGETHEAQDDSETVLAGPTSPIPSLGNVSETASGSVTQPK. Residues 195–207 show a composition bias toward polar residues; the sequence is GNVSETASGSVTQ. Phosphoserine is present on Ser224. Positions 227 to 256 are disordered; the sequence is LRTRTSSSETEEKKPEKPLILQSLGPKTQS. The region spanning 269-330 is the SH3 3 domain; it reads KAKEYCRTLF…PDNFAVQINE (62 aa). The segment at 333–428 is disordered; sequence KDFPKPKKPP…PPPPIAKING (96 aa). 3 consecutive short sequence motifs (SH3-binding) follow at residues 336-352, 378-397, and 410-422; these read PKPKKPPPPAKAPAPKP, KPSKPAAPQVPPKKPTPPTK, and PKRPEKPVPPPPP. The segment covering 341-351 has biased composition (pro residues); the sequence is PPPPAKAPAPK. Over residues 356-379 the composition is skewed to basic and acidic residues; that stretch reads AAEKKYFSLKPEEKDEKSTLEQKP. Over residues 385–395 the composition is skewed to pro residues; it reads PQVPPKKPTPP. Residues Ser458, Ser463, Ser469, Ser510, and Ser514 each carry the phosphoserine modification. A Glycyl lysine isopeptide (Lys-Gly) (interchain with G-Cter in SUMO2) cross-link involves residue Lys523. The residue at position 565 (Thr565) is a Phosphothreonine. Positions 577–638 form a coiled coil; sequence DVKKNSLDEL…IEKLKKAVLS (62 aa). Ser582 carries the post-translational modification Phosphoserine.

Homodimer. Interacts with F-actin, PKD2, NPHS1 and NPHS2. Interacts with WTIP. Interacts with DDN; interaction is direct. Interacts (via SH3 2 domain) with CBL (via phosphorylated C-terminus). Interacts with BCAR1/p130Cas (via SH3 domain). Interacts with MVB12A and ARHGAP17. Interacts with ANLN, CD2 and CBLB. Interacts with PDCD6IP and TSG101. Interacts with RIN3. Interacts directly with RET (inactive) and CBLC; upon RET activation by GDNF suggested to dissociate from RET as CBLC:CD2AP complex. Interacts with CGNL1 and SH3BP1; probably part of a complex at cell junctions. Interacts with CAPZA1. In terms of assembly, (Microbial infection) Interacts (via SH3 domains) with Chikungunya virus non-structural protein 3 (via C-terminus); this interaction plays a role in initiation of viral replication. Post-translationally, phosphorylated on tyrosine residues; probably by c-Abl, Fyn and c-Src. Widely expressed in fetal and adult tissues.

The protein resides in the cytoplasm. It is found in the cytoskeleton. The protein localises to the cell projection. It localises to the ruffle. Its subcellular location is the cell junction. Seems to act as an adapter protein between membrane proteins and the actin cytoskeleton. In collaboration with CBLC, modulates the rate of RET turnover and may act as regulatory checkpoint that limits the potency of GDNF on neuronal survival. Controls CBLC function, converting it from an inhibitor to a promoter of RET degradation. May play a role in receptor clustering and cytoskeletal polarity in the junction between T-cell and antigen-presenting cell. May anchor the podocyte slit diaphragm to the actin cytoskeleton in renal glomerolus. Also required for cytokinesis. Plays a role in epithelial cell junctions formation. The sequence is that of CD2-associated protein (CD2AP) from Homo sapiens (Human).